We begin with the raw amino-acid sequence, 322 residues long: GTP 3',8-cyclase (322 aa).

The Radical SAM core domain maps to Ser-5–Lys-217. Arg-14 provides a ligand contact to GTP. [4Fe-4S] cluster is bound by residues Cys-21 and Cys-25. Tyr-27 provides a ligand contact to S-adenosyl-L-methionine. Cys-28 contacts [4Fe-4S] cluster. GTP is bound at residue Arg-64. Gly-68 is an S-adenosyl-L-methionine binding site. Thr-95 is a binding site for GTP. Position 119 (Ser-119) interacts with S-adenosyl-L-methionine. GTP is bound at residue Lys-155. Met-189 lines the S-adenosyl-L-methionine pocket. Residues Cys-249 and Cys-252 each contribute to the [4Fe-4S] cluster site. Arg-254 to Arg-256 is a GTP binding site. Residue Cys-266 coordinates [4Fe-4S] cluster.

Belongs to the radical SAM superfamily. MoaA family. In terms of assembly, monomer and homodimer. The cofactor is [4Fe-4S] cluster.

It carries out the reaction GTP + AH2 + S-adenosyl-L-methionine = (8S)-3',8-cyclo-7,8-dihydroguanosine 5'-triphosphate + 5'-deoxyadenosine + L-methionine + A + H(+). Its pathway is cofactor biosynthesis; molybdopterin biosynthesis. Functionally, catalyzes the cyclization of GTP to (8S)-3',8-cyclo-7,8-dihydroguanosine 5'-triphosphate. This chain is GTP 3',8-cyclase, found in Campylobacter fetus subsp. fetus (strain 82-40).